Reading from the N-terminus, the 594-residue chain is Type IV inositol polyphosphate 5-phosphatase 7 (594 aa).

The segment at 246–300 (FRCGHRPSDYSRRPSDYSRPSDYYSRPSNYSRPSDVSRWGSSDDDNGPGDSPSTF) is disordered. Positions 251–261 (RPSDYSRRPSD) are enriched in basic and acidic residues. Over residues 262–279 (YSRPSDYYSRPSNYSRPS) the composition is skewed to low complexity. Catalytic regions lie at residues 435–450 (DRVI…IALS) and 515–530 (KRRT…WHGE).

Belongs to the inositol polyphosphate 5-phosphatase family. As to expression, broadly expressed in emerging organs. Mostly localized in procambium of growing organs. Restricted to vascular differentiating cells of young organs.

The protein localises to the nucleus. It localises to the cell membrane. It carries out the reaction a 1,2-diacyl-sn-glycero-3-phospho-(1D-myo-inositol-4,5-bisphosphate) + H2O = a 1,2-diacyl-sn-glycero-3-phospho-(1D-myo-inositol 4-phosphate) + phosphate. The catalysed reaction is a 1,2-diacyl-sn-glycero-3-phospho-(1D-myo-inositol-3,4,5-trisphosphate) + H2O = a 1,2-diacyl-sn-glycero-3-phospho-(1D-myo-inositol-3,4-bisphosphate) + phosphate. Functionally, has phosphatase activity toward PtdIns(4,5)P2 and at a lower extent toward PtdIns(3,4,5)P3 but not toward Ins(1,4,5)P3. Acts redundantly with CVP2 for maintaining vascular continuity. Regulates phosphoinositide-dependent VAN3 localization. Functions in salt stress response by regulating reactive oxygen species (ROS) production and stress-responsive genes expression. In Arabidopsis thaliana (Mouse-ear cress), this protein is Type IV inositol polyphosphate 5-phosphatase 7.